A 466-amino-acid chain; its full sequence is Ribulose bisphosphate carboxylase/oxygenase activase, chloroplastic (466 aa).

The transit peptide at 1-48 (MAAAFSSTVGAPASTPTNFLGKKLKKQVTSAVNYHGKSSNINRFKVMA) directs the protein to the chloroplast. An ATP-binding site is contributed by 156 to 163 (GGKGQGKS). A disordered region spans residues 429-454 (QGAQQAGNLPVPEGCTDPVAKNFDPT).

Belongs to the RuBisCO activase family.

It localises to the plastid. It is found in the chloroplast stroma. Its function is as follows. Activation of RuBisCO (ribulose-1,5-bisphosphate carboxylase/oxygenase; EC 4.1.1.39) involves the ATP-dependent carboxylation of the epsilon-amino group of lysine leading to a carbamate structure. The polypeptide is Ribulose bisphosphate carboxylase/oxygenase activase, chloroplastic (RCA) (Oryza sativa subsp. japonica (Rice)).